Consider the following 606-residue polypeptide: Aspartate--tRNA(Asp/Asn) ligase (606 aa).

An L-aspartate-binding site is contributed by Glu-196. The aspartate stretch occupies residues 220-223 (QIFK). Arg-242 contributes to the L-aspartate binding site. ATP-binding positions include 242-244 (RDE) and Gln-251. Residue His-465 coordinates L-aspartate. An ATP-binding site is contributed by Glu-499. Residue Arg-506 participates in L-aspartate binding. 551–554 (GMDR) is a binding site for ATP.

It belongs to the class-II aminoacyl-tRNA synthetase family. Type 1 subfamily. In terms of assembly, homodimer.

It localises to the cytoplasm. The catalysed reaction is tRNA(Asx) + L-aspartate + ATP = L-aspartyl-tRNA(Asx) + AMP + diphosphate. In terms of biological role, aspartyl-tRNA synthetase with relaxed tRNA specificity since it is able to aspartylate not only its cognate tRNA(Asp) but also tRNA(Asn). Reaction proceeds in two steps: L-aspartate is first activated by ATP to form Asp-AMP and then transferred to the acceptor end of tRNA(Asp/Asn). The polypeptide is Aspartate--tRNA(Asp/Asn) ligase (Oleidesulfovibrio alaskensis (strain ATCC BAA-1058 / DSM 17464 / G20) (Desulfovibrio alaskensis)).